A 399-amino-acid chain; its full sequence is PCI domain-containing protein 2 (399 aa).

Residues 210 to 391 (VTYKYYVGRK…QKLVVSKQNP (182 aa)) form the PCI domain.

It belongs to the CSN12 family.

The sequence is that of PCI domain-containing protein 2 (pcid2) from Danio rerio (Zebrafish).